The sequence spans 452 residues: tRNA modification GTPase MnmE (452 aa).

The (6S)-5-formyl-5,6,7,8-tetrahydrofolate site is built by R22, E79, and K119. The region spanning 215-375 is the TrmE-type G domain; the sequence is GMKVVIAGRP…LRQHLKQSMG (161 aa). A K(+)-binding site is contributed by N225. Residues 225–230, 244–250, 269–272, and 333–336 contribute to the GTP site; these read NAGKSS, TDIAGTT, DTAG, and NKAD. S229 contacts Mg(2+). K(+)-binding residues include T244, I246, and T249. Residue T250 coordinates Mg(2+). A (6S)-5-formyl-5,6,7,8-tetrahydrofolate-binding site is contributed by K452.

This sequence belongs to the TRAFAC class TrmE-Era-EngA-EngB-Septin-like GTPase superfamily. TrmE GTPase family. As to quaternary structure, homodimer. Heterotetramer of two MnmE and two MnmG subunits. K(+) is required as a cofactor.

The protein resides in the cytoplasm. Its function is as follows. Exhibits a very high intrinsic GTPase hydrolysis rate. Involved in the addition of a carboxymethylaminomethyl (cmnm) group at the wobble position (U34) of certain tRNAs, forming tRNA-cmnm(5)s(2)U34. In Histophilus somni (strain 129Pt) (Haemophilus somnus), this protein is tRNA modification GTPase MnmE.